A 348-amino-acid chain; its full sequence is MSESAKPRITSGSKFRNEHGFSAIKDGVKRSSSNTEGKSLERKPKWLRARMPGGERYDAVRRNVTEHRLSTVCQESHCPNIGECWTNGTATIMVMGSVCTRACKFCAVDTGNPKGWLDPEEPENTAKSVELMGLRYIVLTSVDRDDLPDGGAAHYAACVSAIKQRTPEVAVEALTPDFDAVMSDVEKVVDSGLDVFAQNVETVKRLTSRVRDPRAGYEKTLSVLAHAKKHRPDVLTKTSLMLGLGETEEEILETMDDLRAIGVDILTLGQYLRPTPNHLPVERYVTPEEFNRYRDIGLEKGFMEVPSGPMVRSSYRADRVFDKNNLGLSVPEVPVPDKAMQIPVKAVD.

Residues 1–45 are disordered; that stretch reads MSESAKPRITSGSKFRNEHGFSAIKDGVKRSSSNTEGKSLERKPK. Cys-73, Cys-78, Cys-84, Cys-99, Cys-103, Cys-106, and Ser-314 together coordinate [4Fe-4S] cluster. Positions 85–303 constitute a Radical SAM core domain; that stretch reads WTNGTATIMV…RDIGLEKGFM (219 aa).

This sequence belongs to the radical SAM superfamily. Lipoyl synthase family. The cofactor is [4Fe-4S] cluster.

The protein resides in the cytoplasm. It carries out the reaction [[Fe-S] cluster scaffold protein carrying a second [4Fe-4S](2+) cluster] + N(6)-octanoyl-L-lysyl-[protein] + 2 oxidized [2Fe-2S]-[ferredoxin] + 2 S-adenosyl-L-methionine + 4 H(+) = [[Fe-S] cluster scaffold protein] + N(6)-[(R)-dihydrolipoyl]-L-lysyl-[protein] + 4 Fe(3+) + 2 hydrogen sulfide + 2 5'-deoxyadenosine + 2 L-methionine + 2 reduced [2Fe-2S]-[ferredoxin]. The protein operates within protein modification; protein lipoylation via endogenous pathway; protein N(6)-(lipoyl)lysine from octanoyl-[acyl-carrier-protein]: step 2/2. Functionally, catalyzes the radical-mediated insertion of two sulfur atoms into the C-6 and C-8 positions of the octanoyl moiety bound to the lipoyl domains of lipoate-dependent enzymes, thereby converting the octanoylated domains into lipoylated derivatives. This chain is Lipoyl synthase, found in Marinobacter nauticus (strain ATCC 700491 / DSM 11845 / VT8) (Marinobacter aquaeolei).